We begin with the raw amino-acid sequence, 289 residues long: Diaminopimelate epimerase (289 aa).

Positions 17, 47, and 67 each coordinate substrate. Cys76 functions as the Proton donor in the catalytic mechanism. Substrate-binding positions include 77–78 (GN), Asn164, Asn198, and 216–217 (ER). Cys225 serves as the catalytic Proton acceptor. 226–227 (GS) provides a ligand contact to substrate.

This sequence belongs to the diaminopimelate epimerase family. In terms of assembly, homodimer.

Its subcellular location is the cytoplasm. It catalyses the reaction (2S,6S)-2,6-diaminopimelate = meso-2,6-diaminopimelate. It functions in the pathway amino-acid biosynthesis; L-lysine biosynthesis via DAP pathway; DL-2,6-diaminopimelate from LL-2,6-diaminopimelate: step 1/1. Its function is as follows. Catalyzes the stereoinversion of LL-2,6-diaminopimelate (L,L-DAP) to meso-diaminopimelate (meso-DAP), a precursor of L-lysine and an essential component of the bacterial peptidoglycan. In Bradyrhizobium sp. (strain ORS 278), this protein is Diaminopimelate epimerase.